We begin with the raw amino-acid sequence, 654 residues long: Acetyl-coenzyme A synthetase (654 aa).

Residues 191 to 194 (RRGQ) and T315 contribute to the CoA site. Residues 391-393 (GEP), 415-420 (DTWWQT), D506, and R521 each bind ATP. S529 lines the CoA pocket. R532 contacts ATP. Residues V543, H545, and V548 each coordinate Mg(2+). K615 carries the N6-acetyllysine modification.

It belongs to the ATP-dependent AMP-binding enzyme family. Mg(2+) serves as cofactor. Acetylated. Deacetylation by the SIR2-homolog deacetylase activates the enzyme.

The enzyme catalyses acetate + ATP + CoA = acetyl-CoA + AMP + diphosphate. Its function is as follows. Catalyzes the conversion of acetate into acetyl-CoA (AcCoA), an essential intermediate at the junction of anabolic and catabolic pathways. AcsA undergoes a two-step reaction. In the first half reaction, AcsA combines acetate with ATP to form acetyl-adenylate (AcAMP) intermediate. In the second half reaction, it can then transfer the acetyl group from AcAMP to the sulfhydryl group of CoA, forming the product AcCoA. In Gemmatimonas aurantiaca (strain DSM 14586 / JCM 11422 / NBRC 100505 / T-27), this protein is Acetyl-coenzyme A synthetase.